We begin with the raw amino-acid sequence, 485 residues long: MHTKTIKELSALLQTKKISATELAQLFLKRMGASDLNAFLHVDEALTLQQAAAADQRIASGNAGVLTGIPIAHKDIFVTRNWRSTAGSKMLENYVSPFDATVVENFNQAGMVTLGKLNCDEFAMGSSNENSYFGAVKNPWDKTAIPGGSSGGSAAAIAARLTPASTATDTGGSIRQPAALCGVTGIKPTYGRVSRFGMIAFASSLDQGGPIAKTAEDCGLLLNAMVSFDERDSTSVERDKEDFTRDLNAPLEGLKIGIPREYFGAGLSADVEQAVRAALGEYEKLGATLVDISLPKTELSIPTYYVIAPAEASSNLSRFDGVRYGFRAKDYTDLSDMYCKTRAEGFGEEVKRRILVGAYVLSHGYYDAYYLQAQKIRRLIAQDFQQAFTLCDVIMGPVAPSVAWDLGDKADDPVANYLADIFTLSTSLAGLPGMSIPCGFGQGEKNAKRPVGLQIIGNYFAEAKLLNVAHQYQQATDWHLRQPAE.

Residues K74 and S149 each act as charge relay system in the active site. The active-site Acyl-ester intermediate is S173.

It belongs to the amidase family. GatA subfamily. Heterotrimer of A, B and C subunits.

It carries out the reaction L-glutamyl-tRNA(Gln) + L-glutamine + ATP + H2O = L-glutaminyl-tRNA(Gln) + L-glutamate + ADP + phosphate + H(+). Its function is as follows. Allows the formation of correctly charged Gln-tRNA(Gln) through the transamidation of misacylated Glu-tRNA(Gln) in organisms which lack glutaminyl-tRNA synthetase. The reaction takes place in the presence of glutamine and ATP through an activated gamma-phospho-Glu-tRNA(Gln). This Herminiimonas arsenicoxydans protein is Glutamyl-tRNA(Gln) amidotransferase subunit A.